The chain runs to 92 residues: Probable acyl carrier protein (92 aa).

A Carrier domain is found at 11 to 92 (QVTFEELSAL…QVNATLRTAV (82 aa)). At S49 the chain carries O-(pantetheine 4'-phosphoryl)serine.

In terms of processing, 4'-phosphopantetheine is transferred from CoA to a specific serine of the apo-ACP-like protein.

Involved in developmentally regulated synthesis of a compound biosynthetically related to polyketide antibiotics which is essential for spore color in Streptomyces halstedii. In Streptomyces halstedii, this protein is Probable acyl carrier protein (sch3).